Reading from the N-terminus, the 632-residue chain is Sodium- and chloride-dependent GABA transporter 3 (632 aa).

Residues 1 to 41 are disordered; it reads MTAEKALPLGNGKAAEEARESEAPGGGCSSGGAAPARHPRV. At 1–58 the chain is on the cytoplasmic side; it reads MTAEKALPLGNGKAAEEARESEAPGGGCSSGGAAPARHPRVKRDKAVHERGHWNNKVE. Phosphoserine is present on Ser-21. The next 3 membrane-spanning stretches (helical) occupy residues 59–79, 87–106, and 131–151; these read FVLS…FPYL, AFLI…VFFL, and GIGY…IIIL. Topologically, residues 152-225 are extracellular; it reads AWAIFYLSNC…DGIEHIGNLR (74 aa). 3 N-linked (GlcNAc...) asparagine glycosylation sites follow: Asn-187, Asn-190, and Asn-198. Transmembrane regions (helical) follow at residues 226 to 244, 253 to 270, 306 to 323, 335 to 356, 389 to 408, 438 to 456, 473 to 493, 514 to 533, and 553 to 571; these read WELA…FCIW, VVYV…ILLI, IFFS…LGSY, IMLC…FSVL, MPLS…FLGL, LLIL…VMLT, GMCL…VYGS, WCWM…FFLI, and IGWL…WICI. The Cytoplasmic segment spans residues 572–632; it reads TVWKTEGTLP…AAITEKETHF (61 aa).

It belongs to the sodium:neurotransmitter symporter (SNF) (TC 2.A.22) family. SLC6A11 subfamily. As to expression, widespread distribution in the brain.

The protein localises to the cell membrane. It catalyses the reaction 4-aminobutanoate(out) + chloride(out) + 2 Na(+)(out) = 4-aminobutanoate(in) + chloride(in) + 2 Na(+)(in). It carries out the reaction taurine(out) + chloride(out) + 2 Na(+)(out) = taurine(in) + chloride(in) + 2 Na(+)(in). The catalysed reaction is beta-alanine(out) + chloride(out) + 2 Na(+)(out) = beta-alanine(in) + chloride(in) + 2 Na(+)(in). The enzyme catalyses hypotaurine(out) + chloride(out) + 2 Na(+)(out) = hypotaurine(in) + chloride(in) + 2 Na(+)(in). Its activity is regulated as follows. GABA transport is inhibited by SNAP-5114. Its function is as follows. Mediates sodium- and chloride-dependent transport of gamma-aminobutyric acid (GABA). Can also mediate transport of beta-alanine and to a lower extent that of taurine and hypotaurine. The protein is Sodium- and chloride-dependent GABA transporter 3 (SLC6A11) of Homo sapiens (Human).